Consider the following 135-residue polypeptide: Ribosome-binding factor A (135 aa).

The protein belongs to the RbfA family. Monomer. Binds 30S ribosomal subunits, but not 50S ribosomal subunits or 70S ribosomes.

Its subcellular location is the cytoplasm. Functionally, one of several proteins that assist in the late maturation steps of the functional core of the 30S ribosomal subunit. Associates with free 30S ribosomal subunits (but not with 30S subunits that are part of 70S ribosomes or polysomes). Required for efficient processing of 16S rRNA. May interact with the 5'-terminal helix region of 16S rRNA. The chain is Ribosome-binding factor A from Rhizobium meliloti (strain 1021) (Ensifer meliloti).